The following is a 428-amino-acid chain: Glutamyl-tRNA reductase (428 aa).

Substrate contacts are provided by residues 49–52 (TCNR), Ser-109, 114–116 (EGQ), and Gln-120. Residue Cys-50 is the Nucleophile of the active site. Residue 189 to 194 (GAGKMS) participates in NADP(+) binding.

Belongs to the glutamyl-tRNA reductase family. In terms of assembly, homodimer.

It carries out the reaction (S)-4-amino-5-oxopentanoate + tRNA(Glu) + NADP(+) = L-glutamyl-tRNA(Glu) + NADPH + H(+). The protein operates within porphyrin-containing compound metabolism; protoporphyrin-IX biosynthesis; 5-aminolevulinate from L-glutamyl-tRNA(Glu): step 1/2. Its pathway is porphyrin-containing compound metabolism; chlorophyll biosynthesis. Functionally, catalyzes the NADPH-dependent reduction of glutamyl-tRNA(Glu) to glutamate 1-semialdehyde (GSA). The polypeptide is Glutamyl-tRNA reductase (Gloeothece citriformis (strain PCC 7424) (Cyanothece sp. (strain PCC 7424))).